A 76-amino-acid polypeptide reads, in one-letter code: Small ribosomal subunit protein bS18 (76 aa).

It belongs to the bacterial ribosomal protein bS18 family. In terms of assembly, part of the 30S ribosomal subunit. Forms a tight heterodimer with protein bS6.

Its function is as follows. Binds as a heterodimer with protein bS6 to the central domain of the 16S rRNA, where it helps stabilize the platform of the 30S subunit. The protein is Small ribosomal subunit protein bS18 of Symbiobacterium thermophilum (strain DSM 24528 / JCM 14929 / IAM 14863 / T).